We begin with the raw amino-acid sequence, 251 residues long: Segregation and condensation protein A (251 aa).

This sequence belongs to the ScpA family. In terms of assembly, component of a cohesin-like complex composed of ScpA, ScpB and the Smc homodimer, in which ScpA and ScpB bind to the head domain of Smc. The presence of the three proteins is required for the association of the complex with DNA.

The protein localises to the cytoplasm. In terms of biological role, participates in chromosomal partition during cell division. May act via the formation of a condensin-like complex containing Smc and ScpB that pull DNA away from mid-cell into both cell halves. The sequence is that of Segregation and condensation protein A from Clostridium botulinum (strain Alaska E43 / Type E3).